The following is a 40-amino-acid chain: Thioredoxin (40 aa).

Cys-29 and Cys-32 form a disulfide bridge.

Belongs to the thioredoxin family.

Functionally, participates in various redox reactions through the reversible oxidation of its active center dithiol to a disulfide and catalyzes dithiol-disulfide exchange reactions. This Clostridium sporogenes protein is Thioredoxin (trxA).